The primary structure comprises 471 residues: WASH complex subunit 1 (471 aa).

The segment at 1 to 54 is required for WASH complex assembly; sequence MTPTGTQHSLAGQTYAVPLIQPDLRREEAIQQVADALQYLQKVSGDIFSRISQR. The WHD1 stretch occupies residues 1 to 167; the sequence is MTPTGTQHSL…EGLGGLPSNI (167 aa). The interval 297–471 is disordered; sequence EDGVLTARPP…GEEDEDDWES (175 aa). Positions 304 to 336 are enriched in pro residues; it reads RPPPPPPPPPPPAPAVLMSVPPPPPPPQAPPGQ. Residues 353–471 form a VCA region; that stretch reads QGAPKEVVDP…GEEDEDDWES (119 aa). Residues 365-387 form the WH2 domain; sequence GRATLLESIRQAGGIGKAKLRSV. A compositionally biased stretch (basic and acidic residues) spans 386–402; that stretch reads SVKERKLEKKKQKEQEQ. A compositionally biased stretch (gly residues) spans 428–442; it reads SGKGPGSGASEGPGG. The span at 462–471 shows a compositional bias: acidic residues; that stretch reads GEEDEDDWES.

The protein belongs to the WASH1 family. As to quaternary structure, component of the WASH core complex also described as WASH regulatory complex SHRC composed of WASHC1, WASHC2, WASHC3, WASHC4 and WASHC5. The WASH core complex associates with the F-actin-capping protein dimer (formed by CAPZA1, CAPZA2 or CAPZA3 and CAPZB); the assembly has been initially described as WASH complex. Interacts (via WHD1 region) with WASHC2; the interaction is direct. Interacts with alpha-tubulin. Interacts with BECN1; WASHC1 and AMBRA1 can competitively interact with BECN1. Interacts with BLOC1S2; may associate with the BLOC-1 complex. Interacts with tubulin gamma chain (TUBG1 or TUBG2). Interacts with TBC1D23.

Its subcellular location is the early endosome membrane. It localises to the recycling endosome membrane. It is found in the late endosome. The protein localises to the cytoplasmic vesicle. The protein resides in the autophagosome. Its subcellular location is the cytoplasm. It localises to the cytoskeleton. It is found in the microtubule organizing center. The protein localises to the centrosome. The protein resides in the centriole. In terms of biological role, acts as a component of the WASH core complex that functions as a nucleation-promoting factor (NPF) at the surface of endosomes, where it recruits and activates the Arp2/3 complex to induce actin polymerization, playing a key role in the fission of tubules that serve as transport intermediates during endosome sorting. Involved in endocytic trafficking of EGF. Involved in transferrin receptor recycling. Regulates the trafficking of endosomal alpha5beta1 integrin to the plasma membrane and involved in invasive cell migration. In T-cells involved in endosome-to-membrane recycling of receptors including T-cell receptor (TCR), CD28 and ITGAL; proposed to be implicated in T-cell proliferation and effector function. In dendritic cells involved in endosome-to-membrane recycling of major histocompatibility complex (MHC) class II probably involving retromer and subsequently allowing antigen sampling, loading and presentation during T-cell activation. Involved in negative regulation of autophagy independently from its role in endosomal sorting by inhibiting BECN1 ubiquitination to inactivate PIK3C3/Vps34 activity. The sequence is that of WASH complex subunit 1 from Bos taurus (Bovine).